A 150-amino-acid chain; its full sequence is D-aminoacyl-tRNA deacylase (150 aa).

A Gly-cisPro motif, important for rejection of L-amino acids motif is present at residues glycine 140–proline 141.

Belongs to the DTD family. In terms of assembly, homodimer.

The protein localises to the cytoplasm. It carries out the reaction glycyl-tRNA(Ala) + H2O = tRNA(Ala) + glycine + H(+). It catalyses the reaction a D-aminoacyl-tRNA + H2O = a tRNA + a D-alpha-amino acid + H(+). Its function is as follows. An aminoacyl-tRNA editing enzyme that deacylates mischarged D-aminoacyl-tRNAs. Also deacylates mischarged glycyl-tRNA(Ala), protecting cells against glycine mischarging by AlaRS. Acts via tRNA-based rather than protein-based catalysis; rejects L-amino acids rather than detecting D-amino acids in the active site. By recycling D-aminoacyl-tRNA to D-amino acids and free tRNA molecules, this enzyme counteracts the toxicity associated with the formation of D-aminoacyl-tRNA entities in vivo and helps enforce protein L-homochirality. This Eremothecium gossypii (strain ATCC 10895 / CBS 109.51 / FGSC 9923 / NRRL Y-1056) (Yeast) protein is D-aminoacyl-tRNA deacylase (DTD1).